A 333-amino-acid polypeptide reads, in one-letter code: Type II secretion system protein K (333 aa).

The propeptide at 1–7 is leader sequence; it reads MRRGQNG. Residues 8–29 form a helical membrane-spanning segment; it reads VALITVLLVVAVVTIVCAGLII. The Periplasmic portion of the chain corresponds to 30-333; it reads RQQLAIRSSA…GGDDWKKDER (304 aa). The tract at residues 313–333 is disordered; sequence MGQGGLPIPSTGGDDWKKDER.

It belongs to the GSP K family. Type II secretion is composed of four main components: the outer membrane complex, the inner membrane complex, the cytoplasmic secretion ATPase and the periplasm-spanning pseudopilus. Interacts with the tip of the type II pseudopilus subunits XcpV, XcpU and XcpW. Interacts with core component XcpT. Cleaved by prepilin peptidase.

The protein localises to the cell inner membrane. Functionally, component of the type II secretion system required for the energy-dependent secretion of extracellular factors such as proteases and toxins from the periplasm. Plays a role in pseudopilus assembly and seems to control its length. Interacts with the pseudopilus tip complex that is critical for the recognition and binding of secretion substrates. Type II pseudopilus confers increased bacterial adhesive capabilities. The chain is Type II secretion system protein K (xcpX) from Pseudomonas aeruginosa (strain ATCC 15692 / DSM 22644 / CIP 104116 / JCM 14847 / LMG 12228 / 1C / PRS 101 / PAO1).